The following is a 653-amino-acid chain: Calpain-10 (653 aa).

Positions 13-321 (LFRDAAFPAA…FDEITIGYPI (309 aa)) constitute a Calpain catalytic domain. Catalysis depends on residues C73, H238, and N263. 2 domain III regions span residues 322-494 (TEAG…VSLS) and 513-653 (EWGT…PSWQ).

It belongs to the peptidase C2 family.

Calcium-regulated non-lysosomal thiol-protease which catalyzes limited proteolysis of substrates involved in cytoskeletal remodeling and signal transduction. May play a role in insulin-stimulated glucose uptake. In Macaca fascicularis (Crab-eating macaque), this protein is Calpain-10 (CAPN10).